Reading from the N-terminus, the 140-residue chain is Large ribosomal subunit protein uL11 (140 aa).

The protein belongs to the universal ribosomal protein uL11 family. In terms of assembly, part of the ribosomal stalk of the 50S ribosomal subunit. Interacts with L10 and the large rRNA to form the base of the stalk. L10 forms an elongated spine to which L12 dimers bind in a sequential fashion forming a multimeric L10(L12)X complex. In terms of processing, one or more lysine residues are methylated.

Its function is as follows. Forms part of the ribosomal stalk which helps the ribosome interact with GTP-bound translation factors. The chain is Large ribosomal subunit protein uL11 from Heliobacterium modesticaldum (strain ATCC 51547 / Ice1).